Consider the following 663-residue polypeptide: General transcription and DNA repair factor IIH subunit tcf-29 (663 aa).

2 consecutive BSD domains span residues 147–206 (WFED…RAYA) and 227–278 (ENGE…LSKK). 2 disordered regions span residues 452 to 491 (DSDG…QHVG) and 513 to 535 (HLTT…EERP). A compositionally biased stretch (basic and acidic residues) spans 453–465 (SDGRGGIDLHRSI). Over residues 515 to 528 (TTTTTHGGSHTTTT) the composition is skewed to low complexity.

Belongs to the TFB1 family. In terms of assembly, component of the 7-subunit TFIIH core complex composed of XPB/rad25, XPD/dnr-10, tcf-30/SSL1, tcf-29/TFB1, tcf-11/TFB2, tcf-14/TFB4 and rtf-1/TFB5, which is active in NER. The core complex associates with the 3-subunit CTD-kinase module TFIIK composed of div-66/cyclin H, prk-3/KIN28 and rtf-2/TFB3 to form the 10-subunit holoenzyme (holo-TFIIH) active in transcription.

Its subcellular location is the nucleus. Component of the general transcription and DNA repair factor IIH (TFIIH) core complex, which is involved in general and transcription-coupled nucleotide excision repair (NER) of damaged DNA and, when complexed to TFIIK, in RNA transcription by RNA polymerase II. In NER, TFIIH acts by opening DNA around the lesion to allow the excision of the damaged oligonucleotide and its replacement by a new DNA fragment. In transcription, TFIIH has an essential role in transcription initiation. When the pre-initiation complex (PIC) has been established, TFIIH is required for promoter opening and promoter escape. Phosphorylation of the C-terminal tail (CTD) of the largest subunit of RNA polymerase II by the kinase module TFIIK controls the initiation of transcription. This Neurospora crassa (strain ATCC 24698 / 74-OR23-1A / CBS 708.71 / DSM 1257 / FGSC 987) protein is General transcription and DNA repair factor IIH subunit tcf-29 (tcf-29).